We begin with the raw amino-acid sequence, 380 residues long: Cytochrome b (380 aa).

A run of 4 helical transmembrane segments spans residues 33–53, 77–98, 113–133, and 178–198; these read FGSL…FLAM, WLIR…YLHI, WNIG…GYVL, and FFAF…LHFF. Positions 83 and 97 each coordinate heme b. Heme b is bound by residues His-182 and His-196. Residue His-201 participates in a ubiquinone binding. 4 helical membrane-spanning segments follow: residues 226 to 246, 288 to 308, 320 to 340, and 347 to 367; these read YKDL…SFFS, LGGV…PILH, LTQL…WIGG, and FIAV…ILIP.

It belongs to the cytochrome b family. The cytochrome bc1 complex contains 3 respiratory subunits (MT-CYB, CYC1 and UQCRFS1), 2 core proteins (UQCRC1 and UQCRC2) and probably 6 low-molecular weight proteins. Requires heme b as cofactor.

Its subcellular location is the mitochondrion inner membrane. In terms of biological role, component of the ubiquinol-cytochrome c reductase complex (complex III or cytochrome b-c1 complex) that is part of the mitochondrial respiratory chain. The b-c1 complex mediates electron transfer from ubiquinol to cytochrome c. Contributes to the generation of a proton gradient across the mitochondrial membrane that is then used for ATP synthesis. This is Cytochrome b (mt-cyb) from Zenopsis nebulosa (Mirror dory).